A 631-amino-acid polypeptide reads, in one-letter code: Sperm-associated antigen 16 protein (631 aa).

The stretch at 152-267 (DVYTQIMLLE…LQETLKKLQR (116 aa)) forms a coiled coil. Residues 266–332 (QRGHSYHGPQ…QPNPNLNVSK (67 aa)) form a disordered region. Composition is skewed to basic and acidic residues over residues 277–287 (KVDHSREKENA) and 295–304 (GLREAREQNK). WD repeat units follow at residues 350–389 (LHEL…VLLT), 392–431 (GHTD…CILT), 434–473 (GHSR…CRCT), 476–515 (GHTD…CEQS), 518–557 (GHMH…PIVS), 560–600 (IGPS…HKLM), and 601–630 (GHEN…VRTW).

Interacts with SPAG6 and STK36. In terms of processing, phosphorylated by TSSK2. In terms of tissue distribution, isoform 1 is detected in testis. Isoform 4 is detected in testis and brain, and at lower levels in kidney, heart, pancreas, thyroid, ovary, adrenal gland, spinal cord, trachea and liver.

It is found in the cytoplasm. Its subcellular location is the cytoskeleton. The protein resides in the flagellum axoneme. The protein localises to the cilium axoneme. It localises to the cell projection. It is found in the cilium. Its subcellular location is the flagellum. In terms of biological role, necessary for sperm flagellar function. Plays a role in motile ciliogenesis. May help to recruit STK36 to the cilium or apical surface of the cell to initiate subsequent steps of construction of the central pair apparatus of motile cilia. The polypeptide is Sperm-associated antigen 16 protein (SPAG16) (Homo sapiens (Human)).